The primary structure comprises 608 residues: Glutamine--fructose-6-phosphate aminotransferase [isomerizing] (608 aa).

The Nucleophile; for GATase activity role is filled by Cys-2. The Glutamine amidotransferase type-2 domain maps to 2 to 217 (CGIVGYIGDK…DHEIAIIKKD (216 aa)). 2 consecutive SIS domains span residues 285 to 424 (TKED…KKGT) and 453 to 598 (VIQK…VDKP). The active-site For Fru-6P isomerization activity is Lys-603.

Homodimer.

Its subcellular location is the cytoplasm. The catalysed reaction is D-fructose 6-phosphate + L-glutamine = D-glucosamine 6-phosphate + L-glutamate. In terms of biological role, catalyzes the first step in hexosamine metabolism, converting fructose-6P into glucosamine-6P using glutamine as a nitrogen source. The polypeptide is Glutamine--fructose-6-phosphate aminotransferase [isomerizing] (Caldanaerobacter subterraneus subsp. tengcongensis (strain DSM 15242 / JCM 11007 / NBRC 100824 / MB4) (Thermoanaerobacter tengcongensis)).